A 141-amino-acid chain; its full sequence is Hemoglobin subunit alpha-D (141 aa).

Positions 1 to 141 (MLTADDKKLI…VAAVLAEKYR (141 aa)) constitute a Globin domain. The heme b site is built by His-58 and His-87.

Belongs to the globin family. In terms of assembly, heterotetramer of two alpha-D chains and two beta chains. Red blood cells.

Functionally, involved in oxygen transport from the lung to the various peripheral tissues. This Struthio camelus (Common ostrich) protein is Hemoglobin subunit alpha-D (HBAD).